The primary structure comprises 274 residues: Formamidopyrimidine-DNA glycosylase (274 aa).

Catalysis depends on P2, which acts as the Schiff-base intermediate with DNA. The active-site Proton donor is the E3. The active-site Proton donor; for beta-elimination activity is K58. H91 and R110 together coordinate DNA. Residues Q238–R272 form an FPG-type zinc finger. R262 functions as the Proton donor; for delta-elimination activity in the catalytic mechanism.

The protein belongs to the FPG family. As to quaternary structure, monomer. The cofactor is Zn(2+).

The enzyme catalyses Hydrolysis of DNA containing ring-opened 7-methylguanine residues, releasing 2,6-diamino-4-hydroxy-5-(N-methyl)formamidopyrimidine.. It catalyses the reaction 2'-deoxyribonucleotide-(2'-deoxyribose 5'-phosphate)-2'-deoxyribonucleotide-DNA = a 3'-end 2'-deoxyribonucleotide-(2,3-dehydro-2,3-deoxyribose 5'-phosphate)-DNA + a 5'-end 5'-phospho-2'-deoxyribonucleoside-DNA + H(+). Functionally, involved in base excision repair of DNA damaged by oxidation or by mutagenic agents. Acts as a DNA glycosylase that recognizes and removes damaged bases. Has a preference for oxidized purines, such as 7,8-dihydro-8-oxoguanine (8-oxoG). Has AP (apurinic/apyrimidinic) lyase activity and introduces nicks in the DNA strand. Cleaves the DNA backbone by beta-delta elimination to generate a single-strand break at the site of the removed base with both 3'- and 5'-phosphates. This is Formamidopyrimidine-DNA glycosylase from Streptococcus pneumoniae (strain ATCC BAA-255 / R6).